A 428-amino-acid chain; its full sequence is Elongation factor 1-alpha (428 aa).

Residues 5-215 form the tr-type G domain; the sequence is KPHVNIVFIG…ALDQIPEPPK (211 aa). The G1 stretch occupies residues 14–21; sequence GHVDHGKS. 14–21 serves as a coordination point for GTP; sequence GHVDHGKS. Serine 21 lines the Mg(2+) pocket. Residues 68 to 72 form a G2 region; it reads GITID. Residues 89 to 92 are G3; sequence DAPG. GTP contacts are provided by residues 89-93 and 144-147; these read DAPGH and NKMD. The G4 stretch occupies residues 144 to 147; sequence NKMD. The segment at 181 to 183 is G5; it reads SAW.

Belongs to the TRAFAC class translation factor GTPase superfamily. Classic translation factor GTPase family. EF-Tu/EF-1A subfamily.

Its subcellular location is the cytoplasm. The catalysed reaction is GTP + H2O = GDP + phosphate + H(+). Functionally, GTP hydrolase that promotes the GTP-dependent binding of aminoacyl-tRNA to the A-site of ribosomes during protein biosynthesis. This Thermococcus onnurineus (strain NA1) protein is Elongation factor 1-alpha.